The primary structure comprises 140 residues: Large ribosomal subunit protein uL14 (140 aa).

Ser-17 carries the post-translational modification Phosphoserine. The residue at position 38 (Tyr-38) is a Phosphotyrosine.

It belongs to the universal ribosomal protein uL14 family. In terms of assembly, component of the large ribosomal subunit.

Its subcellular location is the cytoplasm. Its function is as follows. Component of the large ribosomal subunit. The ribosome is a large ribonucleoprotein complex responsible for the synthesis of proteins in the cell. This Canis lupus familiaris (Dog) protein is Large ribosomal subunit protein uL14 (RPL23).